A 563-amino-acid chain; its full sequence is Inclusion membrane protein M (563 aa).

The Cytoplasmic portion of the chain corresponds to 1–36 (MVYFRAHQPRHTPKTFPLEVHHSFSDKHPQIAKAMR). A helical transmembrane segment spans residues 37 to 57 (ITGIALAALSLLAVVACVIAV). Position 58 (Ser58) is a topological domain, vacuolar. A helical membrane pass occupies residues 59-79 (AGGAAIPLAVISGIAVMSGLL). Topologically, residues 80–252 (SAATIICSAK…VLKVALSLGV (173 aa)) are cytoplasmic. A helical transmembrane segment spans residues 253 to 273 (LAGVAALIIFLPPSLPFIAVI). Position 274 (Gly274) is a topological domain, vacuolar. A helical membrane pass occupies residues 275–295 (VSSLALGMASFLMIRGIKYLL). At 296 to 563 (EHSPLNRKQL…QLAQYLLDNH (268 aa)) the chain is on the cytoplasmic side.

It belongs to the chlamydial CPn_0065/CT_288/TC_0561 family. In terms of assembly, interacts with host CCDC146. In host cells infected with C.trachomatis incM, CCDC146 is recruited to the periphery of the pathogen-containing vacuole but recruitment is not dependent on incM.

It is found in the host vacuole. Its subcellular location is the host pathogen-containing vacuole. It localises to the host pathogen-containing vacuole membrane. The protein localises to the host pathogen-containing vacuole lumen. The protein resides in the secreted. In terms of biological role, interferes with host cell cytokinesis, centrosome positioning and Golgi distribution, and contributes to the morphology and stability of the pathogen-containing vacuole. May exert its effects by acting directly or indirectly on host microtubules. In Chlamydia trachomatis serovar D (strain ATCC VR-885 / DSM 19411 / UW-3/Cx), this protein is Inclusion membrane protein M.